Reading from the N-terminus, the 507-residue chain is ATP synthase subunit alpha, chloroplastic (507 aa).

170–177 (GDRQTGKT) provides a ligand contact to ATP.

Belongs to the ATPase alpha/beta chains family. In terms of assembly, F-type ATPases have 2 components, CF(1) - the catalytic core - and CF(0) - the membrane proton channel. CF(1) has five subunits: alpha(3), beta(3), gamma(1), delta(1), epsilon(1). CF(0) has four main subunits: a, b, b' and c.

The protein localises to the plastid. It is found in the chloroplast thylakoid membrane. It catalyses the reaction ATP + H2O + 4 H(+)(in) = ADP + phosphate + 5 H(+)(out). Functionally, produces ATP from ADP in the presence of a proton gradient across the membrane. The alpha chain is a regulatory subunit. This is ATP synthase subunit alpha, chloroplastic from Cycas taitungensis (Prince sago).